Reading from the N-terminus, the 1021-residue chain is Ras-related protein Rab-44 (1021 aa).

The tract at residues 1–40 (METGQRTSRKVRKLGSNRRRQTREPADGEGAAVAPEPESW) is disordered. Over residues 7–21 (TSRKVRKLGSNRRRQ) the composition is skewed to basic residues. One can recognise an EF-hand domain in the interval 77 to 112 (GSKEESEMIFDWVDVERKGHLSLEEFSSGLKNIFGS). A disordered region spans residues 113–133 (SQSPHRLRRRKPLPSKRVSAT). A compositionally biased stretch (basic residues) spans 117–126 (HRLRRRKPLP). Residues 191–315 (LAKMTSRLQE…AGRLEEVRGQ (125 aa)) adopt a coiled-coil conformation. Disordered regions lie at residues 339-405 (SFPG…QTPR), 419-483 (LFGQ…LLWG), and 495-827 (VLIP…GGPQ). Over residues 443–467 (KDNKGVDPHEQDIRAEQPVEPHDPD) the composition is skewed to basic and acidic residues. The segment covering 501–514 (DGPPPPANSPPPQA) has biased composition (pro residues). Residues 532–559 (PGSWAPPSGAQPGAGAGPQEPTQTPPTM) are compositionally biased toward low complexity. The span at 676 to 685 (SEEGKQEGRG) shows a compositional bias: basic and acidic residues. Composition is skewed to polar residues over residues 688–697 (DLSSEQSEQS) and 710–727 (LPQQ…TPQA). The span at 736–759 (PGKSAPPRGSPPRGAQPGAGAGPQ) shows a compositional bias: low complexity. Residues 783 to 810 (HAEEQGPPHSREPRAESRLEDPGMDSRE) show a composition bias toward basic and acidic residues. GTP is bound by residues 840–847 (GDSNVGKT), 888–892 (DTAGQ), and 946–949 (NKMD). Residues Cys1019 and Cys1020 are each lipidated (S-geranylgeranyl cysteine).

It belongs to the small GTPase superfamily. Rab family.

The protein resides in the cell membrane. This chain is Ras-related protein Rab-44 (RAB44), found in Homo sapiens (Human).